We begin with the raw amino-acid sequence, 1025 residues long: Multidrug resistance protein MdtC (1025 aa).

Helical transmembrane passes span 3–23, 333–353, 360–380, 387–407, 431–451, 463–483, 528–548, 853–873, 875–895, 897–917, 953–973, and 984–1004; these read FFAL…AITL, EVEQ…FLFL, IIPA…MYLC, LSLM…IVVL, VGFT…PLLL, FAVT…TLTP, LVGV…ISIP, VILI…LYES, VHPL…LLAL, LFNA…IGIV, PIMM…LSGG, and ITIV…TPVV.

It belongs to the resistance-nodulation-cell division (RND) (TC 2.A.6) family. MdtC subfamily. In terms of assembly, part of a tripartite efflux system composed of MdtA, MdtB and MdtC. MdtC forms a heteromultimer with MdtB.

Its subcellular location is the cell inner membrane. Its function is as follows. The MdtABC tripartite complex confers resistance against novobiocin and deoxycholate. In Escherichia coli (strain ATCC 8739 / DSM 1576 / NBRC 3972 / NCIMB 8545 / WDCM 00012 / Crooks), this protein is Multidrug resistance protein MdtC.